Reading from the N-terminus, the 399-residue chain is Elongation factor Tu (399 aa).

Residues 10 to 209 (KPHVNIGTIG…EVDRYIPTPE (200 aa)) form the tr-type G domain. Residues 19–26 (GHVDHGKT) are G1. 19-26 (GHVDHGKT) serves as a coordination point for GTP. Mg(2+) is bound at residue T26. Positions 60–64 (GITIA) are G2. The interval 81–84 (DCPG) is G3. Residues 81 to 85 (DCPGH) and 136 to 139 (NKED) contribute to the GTP site. Positions 136–139 (NKED) are G4. The interval 174–176 (SAL) is G5.

It belongs to the TRAFAC class translation factor GTPase superfamily. Classic translation factor GTPase family. EF-Tu/EF-1A subfamily. In terms of assembly, monomer.

It localises to the cytoplasm. The enzyme catalyses GTP + H2O = GDP + phosphate + H(+). In terms of biological role, GTP hydrolase that promotes the GTP-dependent binding of aminoacyl-tRNA to the A-site of ribosomes during protein biosynthesis. This Wolinella succinogenes (strain ATCC 29543 / DSM 1740 / CCUG 13145 / JCM 31913 / LMG 7466 / NCTC 11488 / FDC 602W) (Vibrio succinogenes) protein is Elongation factor Tu.